The primary structure comprises 145 residues: Basic phospholipase A2 PC10 (145 aa).

The N-terminal stretch at 1–21 (MYPAHLLLLLAVCVSLLGASA) is a signal peptide. A propeptide spanning residues 22–27 (IPPLPL) is cleaved from the precursor. 7 disulfide bridges follow: C38–C98, C54–C144, C56–C72, C71–C125, C78–C118, C87–C111, and C105–C116. 3 residues coordinate Ca(2+): Y55, G57, and G59. H75 is an active-site residue. Position 76 (D76) interacts with Ca(2+). D119 is a catalytic residue.

Belongs to the phospholipase A2 family. Group I subfamily. D49 sub-subfamily. Ca(2+) is required as a cofactor.

It localises to the secreted. The enzyme catalyses a 1,2-diacyl-sn-glycero-3-phosphocholine + H2O = a 1-acyl-sn-glycero-3-phosphocholine + a fatty acid + H(+). Functionally, PLA2 catalyzes the calcium-dependent hydrolysis of the 2-acyl groups in 3-sn-phosphoglycerides. This Laticauda laticaudata (Blue-ringed sea krait) protein is Basic phospholipase A2 PC10.